The primary structure comprises 154 residues: Hexachlorocyclohexane dehydrochlorinase 1 (154 aa).

Aspartate 25 is an active-site residue. The active-site Proton acceptor is the histidine 73.

This sequence belongs to the HCH dehydrochlorinase family. Homotrimer.

It is found in the periplasm. The catalysed reaction is gamma-hexachlorocyclohexane = (3R,4S,5S,6R)-pentachlorocyclohexene + chloride + H(+). The enzyme catalyses (3R,4S,5S,6R)-pentachlorocyclohexene = (3R,6R)-1,3,4,6-tetrachlorocyclohexa-1,4-diene + chloride + H(+). Its pathway is xenobiotic degradation; hexachlorocyclohexane degradation. Its function is as follows. Catalyzes the conversion of the important environmental pollutant gamma-hexachlorocyclohexane (gamma-HCH or lindane) to 1,3,4,6-tetrachloro-1,4-cyclohexadiene (1,4-TCDN) via gamma-pentachlorocyclohexene (gamma-PCCH). Proceeds by two successive 1,2-anti conformationally dependent dehydrochlorinations. Also shows activity with alpha- and delta-HCH, giving alpha- and delta-PCCH respectively, but not with the beta isomer. The chain is Hexachlorocyclohexane dehydrochlorinase 1 from Sphingobium indicum (strain DSM 16412 / CCM 7286 / MTCC 6364 / B90A).